Consider the following 719-residue polypeptide: Glutathionylspermidine synthase (719 aa).

Residues 54–200 enclose the Peptidase C51 domain; sequence CLPLSSFERK…TESGEVELLD (147 aa). Arginine 350 lines the glutathione pocket. Residue 350 to 352 coordinates ATP; the sequence is RFD. Residues aspartate 352, glutamate 364, and asparagine 366 each contribute to the Mg(2+) site. Serine 369 contributes to the glutathione binding site. Spermidine is bound at residue glutamate 432. Glutathione is bound by residues glutamate 433 and threonine 501. ATP contacts are provided by residues lysine 544, lysine 579, glycine 586, glutamine 653, and 689–691; that span reads KIT.

It in the C-terminal section; belongs to the glutathionylspermidine synthase preATP-grasp family. Mg(2+) serves as cofactor. The N-terminus is blocked.

It carries out the reaction spermidine + glutathione + ATP = glutathionylspermidine + ADP + phosphate + H(+). Conjugates glutathione (gamma-Glu-Cys-Gly) and spermidine to form glutathionylspermidine in the biosynthesis trypanothione (N(1),N(8)-bis(glutathionyl)spermidine), which is involved in maintaining intracellular thiol redox and in defense against oxidants. The protein is Glutathionylspermidine synthase (GSP) of Crithidia fasciculata.